Here is a 141-residue protein sequence, read N- to C-terminus: Large ribosomal subunit protein uL11 (141 aa).

It belongs to the universal ribosomal protein uL11 family. In terms of assembly, part of the ribosomal stalk of the 50S ribosomal subunit. Interacts with L10 and the large rRNA to form the base of the stalk. L10 forms an elongated spine to which L12 dimers bind in a sequential fashion forming a multimeric L10(L12)X complex. One or more lysine residues are methylated.

In terms of biological role, forms part of the ribosomal stalk which helps the ribosome interact with GTP-bound translation factors. This is Large ribosomal subunit protein uL11 from Lactococcus lactis subsp. lactis (strain IL1403) (Streptococcus lactis).